The chain runs to 236 residues: Peroxisomal membrane protein 11D (236 aa).

G2 is subject to N-acetylglycine. Over G2–K92 the chain is Cytoplasmic. Residues N93–G109 traverse the membrane as a helical segment. Residues R110–T207 lie on the Lumenal side of the membrane. The chain crosses the membrane as a helical span at residues P208 to L227. Topologically, residues P228 to P236 are cytoplasmic.

It belongs to the peroxin-11 family. Homooligomer. Interacts with ARC5 and FIS1B on peroxisomes. Expressed in developing siliques.

The protein resides in the peroxisome membrane. Its function is as follows. Involved in peroxisomal proliferation. Promotes peroxisomal duplication, aggregation or elongation without fission. The sequence is that of Peroxisomal membrane protein 11D (PEX11D) from Arabidopsis thaliana (Mouse-ear cress).